The following is a 370-amino-acid chain: Cap-specific mRNA (nucleoside-2'-O-)-methyltransferase 1 (370 aa).

A RrmJ-type SAM-dependent 2'-O-MTase domain is found at 87 to 294; it reads AFRNRAGHKL…ERYLVCIGFI (208 aa). G130 and D207 together coordinate S-adenosyl-L-methionine. K248 functions as the Proton acceptor in the catalytic mechanism.

Component of a complex composed of CBF5, GAR1, NHP2, MTR1, NOP10 and Tb11.01.8210.

Its subcellular location is the nucleus. The enzyme catalyses a 5'-end (N(7)-methyl 5'-triphosphoguanosine)-ribonucleoside in mRNA + S-adenosyl-L-methionine = a 5'-end (N(7)-methyl 5'-triphosphoguanosine)-(2'-O-methyl-ribonucleoside) in mRNA + S-adenosyl-L-homocysteine + H(+). Functionally, S-adenosyl-L-methionine-dependent methyltransferase that mediates RNA cap1 2'-O-ribose methylation to the 5'-cap structure of spliced leader and U1 small nuclear RNAs. Methylates the ribose of the first nucleotide of a m(7)GpppG-capped RNA to produce m(7)GpppNmp (cap1). Cap1 modification is linked to higher levels of translation. Recognizes a guanosine cap on RNA independent of its N(7) methylation status. In Trypanosoma brucei brucei (strain 927/4 GUTat10.1), this protein is Cap-specific mRNA (nucleoside-2'-O-)-methyltransferase 1 (MTR1).